We begin with the raw amino-acid sequence, 290 residues long: MMADTLEIVLITGMSGSGKSVALHALEDAGYYCVDNLPPELLAAFVALEHQHHGNRVAIAMDVRSATALPLVPQQLRRLRGEGVTVHSLFLDATTDTLVRRFSETRRRHPLSRDEWYGEPHALLETLELERELLADLREQSHVIDTSAIRAAQLQGYVKSLMPALPGQLTLVFQSFAFKRGVPVDADYVFDVRMLPNPHYEPGLRNLTGKDQPVVHYLEQAREVRQMREHITHFLGHWLEPLAQNHRSYVTVAIGCTGGQHRSVYLVEQLAAEFSDRWTTLRRHRELDGR.

13-20 contacts ATP; it reads GMSGSGKS. Position 62 to 65 (62 to 65) interacts with GTP; it reads DVRS.

The protein belongs to the RapZ-like family.

Displays ATPase and GTPase activities. The sequence is that of Nucleotide-binding protein Aave_3603 from Paracidovorax citrulli (strain AAC00-1) (Acidovorax citrulli).